The primary structure comprises 281 residues: 4-diphosphocytidyl-2-C-methyl-D-erythritol kinase (281 aa).

Residue Lys11 is part of the active site. 95–105 is an ATP binding site; that stretch reads PVAAGLGGGSS. Residue Asp137 is part of the active site.

Belongs to the GHMP kinase family. IspE subfamily.

The enzyme catalyses 4-CDP-2-C-methyl-D-erythritol + ATP = 4-CDP-2-C-methyl-D-erythritol 2-phosphate + ADP + H(+). The protein operates within isoprenoid biosynthesis; isopentenyl diphosphate biosynthesis via DXP pathway; isopentenyl diphosphate from 1-deoxy-D-xylulose 5-phosphate: step 3/6. In terms of biological role, catalyzes the phosphorylation of the position 2 hydroxy group of 4-diphosphocytidyl-2C-methyl-D-erythritol. The polypeptide is 4-diphosphocytidyl-2-C-methyl-D-erythritol kinase (Geobacter metallireducens (strain ATCC 53774 / DSM 7210 / GS-15)).